Reading from the N-terminus, the 74-residue chain is Cytochrome c oxidase assembly factor 5 (74 aa).

Positions 27–65 (QSDCVLKEGKSPRQCLKEGNCKALKYSFFECKRSMLDAR) constitute a CHCH domain. Positions 30-41 (CVLKEGKSPRQC) match the Cx10C motif motif. 2 cysteine pairs are disulfide-bonded: Cys-30-Cys-57 and Cys-41-Cys-47. Ser-37 carries the post-translational modification Phosphoserine. A Cx9C motif motif is present at residues 47–57 (CKALKYSFFEC).

It belongs to the PET191 family.

In terms of biological role, involved in an early step of the mitochondrial complex IV assembly process. This is Cytochrome c oxidase assembly factor 5 (COA5) from Bos taurus (Bovine).